Reading from the N-terminus, the 197-residue chain is Protein GrpE (197 aa).

A compositionally biased stretch (basic and acidic residues) spans 1–27; the sequence is MTKQEKAENQEKPTEETVEETPKKETP. Residues 1–50 form a disordered region; it reads MTKQEKAENQEKPTEETVEETPKKETPFEPVMEADEVEETTEAQAPVEEA. Positions 32–41 are enriched in acidic residues; the sequence is MEADEVEETT.

It belongs to the GrpE family. Homodimer.

The protein resides in the cytoplasm. Its function is as follows. Participates actively in the response to hyperosmotic and heat shock by preventing the aggregation of stress-denatured proteins, in association with DnaK and GrpE. It is the nucleotide exchange factor for DnaK and may function as a thermosensor. Unfolded proteins bind initially to DnaJ; upon interaction with the DnaJ-bound protein, DnaK hydrolyzes its bound ATP, resulting in the formation of a stable complex. GrpE releases ADP from DnaK; ATP binding to DnaK triggers the release of the substrate protein, thus completing the reaction cycle. Several rounds of ATP-dependent interactions between DnaJ, DnaK and GrpE are required for fully efficient folding. The chain is Protein GrpE from Latilactobacillus sakei (Lactobacillus sakei).